The following is a 368-amino-acid chain: Molybdenum import ATP-binding protein ModC (368 aa).

Positions 1–231 constitute an ABC transporter domain; that stretch reads MKGLQVAFKQ…QAMRPWQSFS (231 aa). Residue 33 to 40 participates in ATP binding; that stretch reads GRSGAGKT. A Mop domain is found at 292 to 363; that stretch reads KTSIRNIIEA…IKGVSVTQRD (72 aa).

The protein belongs to the ABC transporter superfamily. Molybdate importer (TC 3.A.1.8) family. The complex is composed of two ATP-binding proteins (ModC), two transmembrane proteins (ModB) and a solute-binding protein (ModA).

It localises to the cell inner membrane. It carries out the reaction molybdate(out) + ATP + H2O = molybdate(in) + ADP + phosphate + H(+). In terms of biological role, part of the ABC transporter complex ModABC involved in molybdenum import. Responsible for energy coupling to the transport system. This is Molybdenum import ATP-binding protein ModC from Vibrio vulnificus (strain YJ016).